Reading from the N-terminus, the 360-residue chain is Phenylalanine--tRNA ligase alpha subunit (360 aa).

Glu-260 provides a ligand contact to Mg(2+).

This sequence belongs to the class-II aminoacyl-tRNA synthetase family. Phe-tRNA synthetase alpha subunit type 1 subfamily. In terms of assembly, tetramer of two alpha and two beta subunits. Requires Mg(2+) as cofactor.

The protein resides in the cytoplasm. It carries out the reaction tRNA(Phe) + L-phenylalanine + ATP = L-phenylalanyl-tRNA(Phe) + AMP + diphosphate + H(+). This is Phenylalanine--tRNA ligase alpha subunit from Beijerinckia indica subsp. indica (strain ATCC 9039 / DSM 1715 / NCIMB 8712).